Here is a 736-residue protein sequence, read N- to C-terminus: Elongation factor 2 (736 aa).

A tr-type G domain is found at 18 to 261; it reads EQVRNIGITA…MVVKFIPNPR (244 aa). GTP-binding positions include 27–34, 93–97, and 147–150; these read AHVDHGKT, DTPGH, and NKVD. Position 602 is a diphthamide (His-602).

It belongs to the TRAFAC class translation factor GTPase superfamily. Classic translation factor GTPase family. EF-G/EF-2 subfamily.

Its subcellular location is the cytoplasm. In terms of biological role, catalyzes the GTP-dependent ribosomal translocation step during translation elongation. During this step, the ribosome changes from the pre-translocational (PRE) to the post-translocational (POST) state as the newly formed A-site-bound peptidyl-tRNA and P-site-bound deacylated tRNA move to the P and E sites, respectively. Catalyzes the coordinated movement of the two tRNA molecules, the mRNA and conformational changes in the ribosome. The sequence is that of Elongation factor 2 from Staphylothermus marinus (strain ATCC 43588 / DSM 3639 / JCM 9404 / F1).